Reading from the N-terminus, the 185-residue chain is Ribosome-recycling factor (185 aa).

This sequence belongs to the RRF family.

It is found in the cytoplasm. Functionally, responsible for the release of ribosomes from messenger RNA at the termination of protein biosynthesis. May increase the efficiency of translation by recycling ribosomes from one round of translation to another. This is Ribosome-recycling factor from Proteus mirabilis (strain HI4320).